The sequence spans 200 residues: MNVYKRADFWAKKAAAAGYRARSVYKLAALDKKYSLLSRASRVLDLGAAPGSWTQYVLGTAAACTAVCAVDVQPIASDIQDARLQRVQGDLCAADTRARVACNAPFDLILSDAAPRTTGNRTVDTSASACLAAGVCAYVNFLSSDGGLVFKVFQGSEHLAILTHLRAHFGAVCSFKPPASRPRSCELYVVARFFRGTCGK.

Residues G51, W53, D71, D90, and D112 each contribute to the S-adenosyl-L-methionine site. The active-site Proton acceptor is the K151.

Belongs to the class I-like SAM-binding methyltransferase superfamily. RNA methyltransferase RlmE family.

The protein resides in the cytoplasm. It catalyses the reaction uridine(2552) in 23S rRNA + S-adenosyl-L-methionine = 2'-O-methyluridine(2552) in 23S rRNA + S-adenosyl-L-homocysteine + H(+). Specifically methylates the uridine in position 2552 of 23S rRNA at the 2'-O position of the ribose in the fully assembled 50S ribosomal subunit. The protein is Ribosomal RNA large subunit methyltransferase E of Treponema pallidum (strain Nichols).